A 121-amino-acid chain; its full sequence is Immunoglobulin kappa variable 2-40 (121 aa).

A signal peptide spans M1–S19. The 102-residue stretch at E20–P121 folds into the Ig-like domain. The interval D21 to C43 is framework-1. C43 and C114 are disulfide-bonded. The segment at R44–D60 is complementarity-determining-1. The interval W61 to Y75 is framework-2. A complementarity-determining-2 region spans residues T76 to S82. A framework-3 region spans residues G83 to C114. Residues M115–P121 form a complementarity-determining-3 region.

Immunoglobulins are composed of two identical heavy chains and two identical light chains; disulfide-linked.

It is found in the secreted. The protein localises to the cell membrane. In terms of biological role, v region of the variable domain of immunoglobulin light chains that participates in the antigen recognition. Immunoglobulins, also known as antibodies, are membrane-bound or secreted glycoproteins produced by B lymphocytes. In the recognition phase of humoral immunity, the membrane-bound immunoglobulins serve as receptors which, upon binding of a specific antigen, trigger the clonal expansion and differentiation of B lymphocytes into immunoglobulins-secreting plasma cells. Secreted immunoglobulins mediate the effector phase of humoral immunity, which results in the elimination of bound antigens. The antigen binding site is formed by the variable domain of one heavy chain, together with that of its associated light chain. Thus, each immunoglobulin has two antigen binding sites with remarkable affinity for a particular antigen. The variable domains are assembled by a process called V-(D)-J rearrangement and can then be subjected to somatic hypermutations which, after exposure to antigen and selection, allow affinity maturation for a particular antigen. In Homo sapiens (Human), this protein is Immunoglobulin kappa variable 2-40.